A 305-amino-acid polypeptide reads, in one-letter code: Tyrosine recombinase XerC (305 aa).

Residues 1–93 (MVLDGFAAHF…SWRQYCVWLV (93 aa)) enclose the Core-binding (CB) domain. The 181-residue stretch at 114–294 (RVPKALPQEW…DFDHIARLYD (181 aa)) folds into the Tyr recombinase domain. Residues Arg-155, Lys-179, His-246, Arg-249, and His-272 contribute to the active site. Catalysis depends on Tyr-281, which acts as the O-(3'-phospho-DNA)-tyrosine intermediate.

This sequence belongs to the 'phage' integrase family. XerC subfamily. As to quaternary structure, forms a cyclic heterotetrameric complex composed of two molecules of XerC and two molecules of XerD.

It is found in the cytoplasm. Site-specific tyrosine recombinase, which acts by catalyzing the cutting and rejoining of the recombining DNA molecules. The XerC-XerD complex is essential to convert dimers of the bacterial chromosome into monomers to permit their segregation at cell division. It also contributes to the segregational stability of plasmids. The polypeptide is Tyrosine recombinase XerC (Neisseria meningitidis serogroup C / serotype 2a (strain ATCC 700532 / DSM 15464 / FAM18)).